Reading from the N-terminus, the 265-residue chain is Small ribosomal subunit protein uS5 (265 aa).

Residues 1 to 15 (MADTQPAQEAPAADA) are compositionally biased toward low complexity. The segment at 1-44 (MADTQPAQEAPAADAPRAERNFGRGRGGRGGRGRGRGGPGEEKE) is disordered. Positions 26-35 (RGGRGGRGRG) are enriched in basic residues. Positions 88–151 (LHDEMMKIYP…IAAKLNIVPV (64 aa)) constitute an S5 DRBM domain. The tract at residues 245–265 (TEPSRDPTDEHGELLAEMTTA) is disordered. The span at 246–258 (EPSRDPTDEHGEL) shows a compositional bias: basic and acidic residues.

This sequence belongs to the universal ribosomal protein uS5 family.

Component of the ribosome, a large ribonucleoprotein complex responsible for the synthesis of proteins in the cell. The small ribosomal subunit (SSU) binds messenger RNAs (mRNAs) and translates the encoded message by selecting cognate aminoacyl-transfer RNA (tRNA) molecules. The large subunit (LSU) contains the ribosomal catalytic site termed the peptidyl transferase center (PTC), which catalyzes the formation of peptide bonds, thereby polymerizing the amino acids delivered by tRNAs into a polypeptide chain. The nascent polypeptides leave the ribosome through a tunnel in the LSU and interact with protein factors that function in enzymatic processing, targeting, and the membrane insertion of nascent chains at the exit of the ribosomal tunnel. Plays a role in the assembly and function of the 40S ribosomal subunit. Mutations in this protein affects the control of translational fidelity. Involved in nucleolar processing of pre-18S ribosomal RNA and ribosome assembly. This is Small ribosomal subunit protein uS5 from Leishmania amazonensis.